Here is a 496-residue protein sequence, read N- to C-terminus: Solute carrier family 2, facilitated glucose transporter member 3 (496 aa).

Residues 1–10 lie on the Cytoplasmic side of the membrane; sequence MGTQKVTPAL. A helical transmembrane segment spans residues 11–32; it reads IFAITVATIGSFQFGYNTGVIN. Topologically, residues 33 to 64 are extracellular; it reads APEKIIKEFINKTLTDKGNAPPSEVLLTSLWS. Residue asparagine 43 is glycosylated (N-linked (GlcNAc...) asparagine). A helical transmembrane segment spans residues 65–85; sequence LSVAIFSVGGMIGSFSVGLFV. Residues 86–90 are Cytoplasmic-facing; sequence NRFGR. Residues 91-111 form a helical membrane-spanning segment; it reads RNSMLIVNLLAVTGGCFMGLC. The Extracellular portion of the chain corresponds to 112-118; sequence KVAKSVE. A helical membrane pass occupies residues 119–142; it reads MLILGRLIIGLFCGLCTGFVPMYI. Topologically, residues 143 to 153 are cytoplasmic; that stretch reads GEISPTALRGA. Residues 154–174 form a helical membrane-spanning segment; the sequence is FGTLNQLGIVVGILVAQIFGL. Residue glutamine 159 coordinates D-glucose. The Extracellular portion of the chain corresponds to 175–183; the sequence is EFILGSEEL. The chain crosses the membrane as a helical span at residues 184–204; the sequence is WPLLLGFTILPTILQSAALPF. The Cytoplasmic segment spans residues 205–269; the sequence is CPESPRFLLI…LFRVSSYRQP (65 aa). At threonine 232 the chain carries Phosphothreonine. Residues 270 to 290 traverse the membrane as a helical segment; that stretch reads IIISIVLQLSQQLSGINAVFY. Residues 277–279 form an important for selectivity against fructose region; that stretch reads QLS. Residues 280-281 and asparagine 286 contribute to the D-glucose site; that span reads QQ. Over 291–304 the chain is Extracellular; that stretch reads YSTGIFKDAGVQEP. A helical membrane pass occupies residues 305-325; that stretch reads IYATIGAGVVNTIFTVVSLFL. A D-glucose-binding site is contributed by asparagine 315. The Cytoplasmic portion of the chain corresponds to 326–331; it reads VERAGR. A helical membrane pass occupies residues 332-352; sequence RTLHMIGLGGMAFCSTLMTVS. Residues 353–363 are Extracellular-facing; the sequence is LLLKDNYNGMS. A helical transmembrane segment spans residues 364 to 389; that stretch reads FVCIGAILVFVAFFEIGPGPIPWFIV. The D-glucose site is built by glutamate 378 and tryptophan 386. The Cytoplasmic portion of the chain corresponds to 390 to 399; sequence AELFSQGPRP. A helical membrane pass occupies residues 400–420; the sequence is AAMAVAGCSNWTSNFLVGLLF. At 421-429 the chain is on the extracellular side; that stretch reads PSAAHYLGA. A helical transmembrane segment spans residues 430-450; it reads YVFIIFTGFLITFLAFTFFKV. The Cytoplasmic segment spans residues 451 to 496; sequence PETRGRTFEDITRAFEGQAHGADRSGKDGVMEVNSIEPAKETTTNV. A phosphoserine mark is found at serine 475 and serine 485. A Phosphothreonine modification is found at threonine 492.

It belongs to the major facilitator superfamily. Sugar transporter (TC 2.A.1.1) family. Glucose transporter subfamily. In terms of assembly, interacts with SMIM43; the interaction may promote SLC2A3-mediated glucose transport to meet the energy needs of mesendoderm differentiation.

It is found in the cell membrane. Its subcellular location is the perikaryon. The protein resides in the cell projection. It carries out the reaction D-glucose(out) = D-glucose(in). The enzyme catalyses D-galactose(in) = D-galactose(out). Its activity is regulated as follows. Deoxyglucose transport is inhibited by D-glucose, D-galactose and maltose. Galactose transport is inhibited by D-glucose and maltose. Its function is as follows. Facilitative glucose transporter. Can also mediate the uptake of various other monosaccharides across the cell membrane. Mediates the uptake of glucose, 2-deoxyglucose, galactose, mannose, xylose and fucose, and probably also dehydroascorbate. Does not mediate fructose transport. Required for mesendoderm differentiation. The protein is Solute carrier family 2, facilitated glucose transporter member 3 of Pongo abelii (Sumatran orangutan).